Here is a 354-residue protein sequence, read N- to C-terminus: Ornithine transcarbamylase, mitochondrial (354 aa).

A mitochondrion-targeting transit peptide spans 1 to 32; sequence MLFHLRTLLNNAALRNGHNFVVRNFRCGQPLQ. N6-acetyllysine; alternate is present on lysine 70. Residue lysine 70 is modified to N6-succinyllysine; alternate. Position 80 is an N6-succinyllysine (lysine 80). Lysine 88 carries the post-translational modification N6-acetyllysine; alternate. Lysine 88 is subject to N6-succinyllysine; alternate. Serine 133 carries the post-translational modification Phosphoserine. An N6-acetyllysine; alternate mark is found at lysine 144, lysine 221, lysine 231, and lysine 238. An N6-succinyllysine; alternate mark is found at lysine 144, lysine 221, lysine 231, and lysine 238. Lysine 243 is modified (N6-acetyllysine). Residue aspartate 263 is part of the active site. Residues lysine 274 and lysine 289 each carry the N6-succinyllysine modification. Position 292 is an N6-acetyllysine; alternate (lysine 292). Position 292 is an N6-succinyllysine; alternate (lysine 292). Cysteine 303 is a catalytic residue. Position 307 is an N6-acetyllysine; alternate (lysine 307). Residue lysine 307 is modified to N6-succinyllysine; alternate.

The protein belongs to the aspartate/ornithine carbamoyltransferase superfamily. OTCase family. As to quaternary structure, homotrimer. Acetylation at Lys-88 negatively regulates ornithine carbamoyltransferase activity in response to nutrient signals.

The protein localises to the mitochondrion matrix. The catalysed reaction is carbamoyl phosphate + L-ornithine = L-citrulline + phosphate + H(+). It participates in nitrogen metabolism; urea cycle; L-citrulline from L-ornithine and carbamoyl phosphate: step 1/1. Negatively regulated by lysine acetylation. Its function is as follows. Catalyzes the second step of the urea cycle, the condensation of carbamoyl phosphate with L-ornithine to form L-citrulline. The urea cycle ensures the detoxification of ammonia by converting it to urea for excretion. This is Ornithine transcarbamylase, mitochondrial from Bos taurus (Bovine).